A 374-amino-acid chain; its full sequence is RNA polymerase sigma factor SigA (374 aa).

A sigma-70 factor domain-2 region spans residues 141–211; it reads LAEANLRLVV…TRAIADQART (71 aa). Residues 165-168 carry the Interaction with polymerase core subunit RpoC motif; the sequence is DLIQ. A sigma-70 factor domain-3 region spans residues 220 to 296; it reads ETINKLIRVQ…DQDATSPSDH (77 aa). The sigma-70 factor domain-4 stretch occupies residues 309–362; sequence VLDTLTDREENVLRLRFGLDDGRTRTLEEVGRVFGVTRERIRQIEAKALRKLRH. The H-T-H motif DNA-binding region spans 335-354; the sequence is LEEVGRVFGVTRERIRQIEA.

It belongs to the sigma-70 factor family. RpoD/SigA subfamily. Interacts transiently with the RNA polymerase catalytic core.

It is found in the cytoplasm. Its function is as follows. Sigma factors are initiation factors that promote the attachment of RNA polymerase to specific initiation sites and are then released. This sigma factor is the primary sigma factor during exponential growth. The polypeptide is RNA polymerase sigma factor SigA (Listeria monocytogenes serovar 1/2a (strain ATCC BAA-679 / EGD-e)).